Here is a 435-residue protein sequence, read N- to C-terminus: Antho-RFamide neuropeptides type 1 (435 aa).

The first 22 residues, 1–22 (MTTVSYVTILLTVLVQVLTSDA), serve as a signal peptide directing secretion. The propeptide occupies 23 to 193 (KATNNKRELS…SVPGRYGREL (171 aa)). At Gln194 the chain carries Pyrrolidone carboxylic acid. The residue at position 197 (Phe197) is a Phenylalanine amide. Positions 199-201 (REL) are excised as a propeptide. Residue Phe205 is modified to Phenylalanine amide. Positions 207–209 (REA) are excised as a propeptide. Phe213 carries the post-translational modification Phenylalanine amide. A propeptide spanning residues 215 to 217 (REL) is cleaved from the precursor. Phe221 is subject to Phenylalanine amide. Residues 223–225 (REF) constitute a propeptide that is removed on maturation. Phe229 carries the post-translational modification Phenylalanine amide. Over residues 230-371 (GREDQGRFGR…EDIAEADQGR (142 aa)) the composition is skewed to basic and acidic residues. 2 disordered regions span residues 230–374 (GRED…RFGR) and 386–435 (AKKR…AKTS). Positions 231–233 (RED) are excised as a propeptide. Phe237 is subject to Phenylalanine amide. The propeptide occupies 239–241 (RED). Phe245 carries the phenylalanine amide modification. A propeptide spanning residues 247-249 (RED) is cleaved from the precursor. Phenylalanine amide is present on Phe253. Residues 255-257 (RED) constitute a propeptide that is removed on maturation. Residue Phe261 is modified to Phenylalanine amide. Residues 263 to 265 (RED) constitute a propeptide that is removed on maturation. Phe269 bears the Phenylalanine amide mark. Residues 271-273 (RED) constitute a propeptide that is removed on maturation. A Phenylalanine amide modification is found at Phe277. A propeptide spanning residues 279 to 281 (REL) is cleaved from the precursor. Phe285 is subject to Phenylalanine amide. A propeptide spanning residues 287-289 (REF) is cleaved from the precursor. Residue Phe293 is modified to Phenylalanine amide. The propeptide occupies 295 to 297 (RED). Phe301 carries the phenylalanine amide modification. A propeptide spanning residues 303–305 (RED) is cleaved from the precursor. Phenylalanine amide is present on Phe309. The propeptide occupies 311–313 (REL). The residue at position 317 (Phe317) is a Phenylalanine amide. The propeptide occupies 319–321 (RED). Position 325 is a phenylalanine amide (Phe325). The propeptide occupies 327-329 (RED). A Phenylalanine amide modification is found at Phe333. A propeptide spanning residues 335 to 342 (REDLAKED) is cleaved from the precursor. The residue at position 346 (Phe346) is a Phenylalanine amide. Residues 348–355 (REDLAKED) constitute a propeptide that is removed on maturation. Phe359 is modified (phenylalanine amide). The propeptide occupies 361 to 368 (REDIAEAD). Position 372 is a phenylalanine amide (Phe372). Residues 374–435 (RNAAAAAAAA…KSDDALAKTS (62 aa)) constitute a propeptide that is removed on maturation. A compositionally biased stretch (basic and acidic residues) spans 398–435 (SDPKPQTRFRDGKDMQEKRKVEKKDKIEKSDDALAKTS).

Belongs to the FARP (FMRFamide related peptide) family.

The protein resides in the secreted. Its function is as follows. Not known but it could act as a transmitter at neuromuscular synapses. This chain is Antho-RFamide neuropeptides type 1, found in Anthopleura elegantissima (Green aggregating anemone).